The following is a 270-amino-acid chain: Protein ABHD14A (270 aa).

The chain crosses the membrane as a helical; Signal-anchor for type II membrane protein span at residues 9 to 29 (LVVLGLVLLATVLLYLLLPSM). Asn61 carries N-linked (GlcNAc...) asparagine glycosylation. Active-site charge relay system residues include Ser170 and Asp221. N-linked (GlcNAc...) asparagine glycosylation occurs at Asn237. His248 serves as the catalytic Charge relay system.

It belongs to the AB hydrolase superfamily. ABHD14 family.

The protein resides in the cytoplasm. Its subcellular location is the membrane. In terms of biological role, possible role in granule neuron development. This is Protein ABHD14A from Danio rerio (Zebrafish).